A 660-amino-acid chain; its full sequence is Leucine-rich repeat transmembrane protein FLRT2 (660 aa).

The first 35 residues, 1–35 (MGLQTTKWPGRGAFILKFWLIISLGLYLQVSKLLA), serve as a signal peptide directing secretion. 2 cysteine pairs are disulfide-bonded: Cys-36–Cys-42 and Cys-40–Cys-49. The 28-residue stretch at 36–63 (CPSVCRCDRNFVYCNERSLTSVPLGIPE) folds into the LRRNT domain. At 36 to 540 (CPSVCRCDRN…QTTSHSMGSP (505 aa)) the chain is on the extracellular side. LRR repeat units follow at residues 62-87 (PEGV…LHNV), 88-108 (QSVH…MNLP), 109-131 (KNVR…ALAQ), 132-157 (LLKL…AFRE), 159-181 (ISLK…LPVD), 183-202 (QELR…AFQN), 203-228 (LTSL…TFSH), 229-251 (LTKL…DLPG), 252-274 (THLI…AFAN), and 275-298 (LRKL…VFDH). The N-linked (GlcNAc...) asparagine glycan is linked to Asn-202. Residues 310–362 (NPWFCDCSIKWVTEWLKYIPSSLNVRGFMCQGPEQVRGMAVRELNMNLLSCPT) form the LRRCT domain. Cystine bridges form between Cys-314–Cys-339 and Cys-316–Cys-360. Positions 371–396 (TPAPSTVSPTTQSPTLSVPSPSRGSV) are enriched in low complexity. The interval 371-413 (TPAPSTVSPTTQSPTLSVPSPSRGSVPPAPTPSKLPTIPDWDG) is disordered. Positions 419-517 (PPISERIQLS…ICSEATTHAS (99 aa)) constitute a Fibronectin type-III domain. Residues 541–561 (FLLAGLIGGAVIFVLVVLLSV) form a helical membrane-spanning segment. At 562–660 (FCWHMHKKGR…SVPDLEHCHT (99 aa)) the chain is on the cytoplasmic side.

Self-associates (via leucine-rich repeats), giving rise to homooligomers. Interacts with FGFR1. Interacts with FGFR2. Interacts (via extracellular domain) with ADGRL1/LPHN1. Interacts (via extracellular domain) with ADGRL3 (via olfactomedin-like domain). Interacts (via extracellular domain) with UNC5D (via the first Ig-like domain). Can also interact (via extracellular domain) with UNC5B, but with much lower affinity. Interacts (via extracellular domain) with FN1. N-glycosylated. Post-translationally, proteolytic cleavage in the juxtamembrane region gives rise to a soluble ectodomain. Cleavage is probably effected by a metalloprotease. Detected in adult brain (at protein level).

The protein localises to the cell membrane. It localises to the endoplasmic reticulum membrane. Its subcellular location is the cell junction. The protein resides in the focal adhesion. It is found in the secreted. The protein localises to the extracellular space. It localises to the extracellular matrix. Its subcellular location is the synapse. The protein resides in the synaptosome. It is found in the microsome membrane. Functions in cell-cell adhesion, cell migration and axon guidance. Mediates cell-cell adhesion via its interactions with ADGRL3 and probably also other latrophilins that are expressed at the surface of adjacent cells. May play a role in the migration of cortical neurons during brain development via its interaction with UNC5D. Mediates axon growth cone collapse and plays a repulsive role in neuron guidance via its interaction with UNC5D, and possibly also other UNC-5 family members. Plays a role in fibroblast growth factor-mediated signaling cascades. Required for normal organization of the cardiac basement membrane during embryogenesis, and for normal embryonic epicardium and heart morphogenesis. The protein is Leucine-rich repeat transmembrane protein FLRT2 of Mus musculus (Mouse).